Consider the following 269-residue polypeptide: UPF0494 membrane protein C1348.01 (269 aa).

4 helical membrane passes run tryptophan 107 to valine 127, isoleucine 144 to phenylalanine 164, glycine 177 to leucine 197, and isoleucine 201 to glycine 221.

Belongs to the UPF0494 family.

It localises to the vacuole membrane. The protein is UPF0494 membrane protein C1348.01 of Schizosaccharomyces pombe (strain 972 / ATCC 24843) (Fission yeast).